The following is a 301-amino-acid chain: Probable aspartoacylase (301 aa).

Zn(2+) contacts are provided by histidine 13 and glutamate 16. Residues arginine 54 and 61–62 (NR) contribute to the substrate site. Histidine 105 serves as a coordination point for Zn(2+). 2 residues coordinate substrate: glutamate 163 and tyrosine 273.

The protein belongs to the AspA/AstE family. Aspartoacylase subfamily. Requires Zn(2+) as cofactor.

It carries out the reaction an N-acyl-L-aspartate + H2O = a carboxylate + L-aspartate. This is Probable aspartoacylase from Prochlorococcus marinus (strain MIT 9312).